The sequence spans 130 residues: UPF0102 protein RPE_0358 (130 aa).

It belongs to the UPF0102 family.

The protein is UPF0102 protein RPE_0358 of Rhodopseudomonas palustris (strain BisA53).